Consider the following 431-residue polypeptide: tRNA(Ile)-lysidine synthase (431 aa).

Residue 25 to 30 coordinates ATP; sequence SGGPDS.

Belongs to the tRNA(Ile)-lysidine synthase family.

The protein localises to the cytoplasm. The catalysed reaction is cytidine(34) in tRNA(Ile2) + L-lysine + ATP = lysidine(34) in tRNA(Ile2) + AMP + diphosphate + H(+). In terms of biological role, ligates lysine onto the cytidine present at position 34 of the AUA codon-specific tRNA(Ile) that contains the anticodon CAU, in an ATP-dependent manner. Cytidine is converted to lysidine, thus changing the amino acid specificity of the tRNA from methionine to isoleucine. This is tRNA(Ile)-lysidine synthase from Lactobacillus johnsonii (strain CNCM I-12250 / La1 / NCC 533).